The primary structure comprises 134 residues: Postmeiotic segregation increased 2-like protein 5 (134 aa).

The protein belongs to the DNA mismatch repair MutL/HexB family.

The protein is Postmeiotic segregation increased 2-like protein 5 (PMS2P5) of Homo sapiens (Human).